The following is a 289-amino-acid chain: uncharacterized protein (289 aa).

The span at 1–20 shows a compositional bias: basic and acidic residues; the sequence is MNPMDRQTEGQEPQHQDRQP. Residues 1–39 form a disordered region; the sequence is MNPMDRQTEGQEPQHQDRQPGIESKMNPLPLSEDEDYRG. 49–73 serves as a coordination point for NADP(+); that stretch reads IITGGDSGIGRAAAIAFAKEGADIS. Ser181 serves as a coordination point for substrate. The active-site Proton acceptor is the Tyr194.

Belongs to the short-chain dehydrogenases/reductases (SDR) family.

This is an uncharacterized protein from Bacillus subtilis (strain 168).